Reading from the N-terminus, the 89-residue chain is Small ribosomal subunit protein uS15 (89 aa).

Belongs to the universal ribosomal protein uS15 family. In terms of assembly, part of the 30S ribosomal subunit. Forms a bridge to the 50S subunit in the 70S ribosome, contacting the 23S rRNA.

Its function is as follows. One of the primary rRNA binding proteins, it binds directly to 16S rRNA where it helps nucleate assembly of the platform of the 30S subunit by binding and bridging several RNA helices of the 16S rRNA. In terms of biological role, forms an intersubunit bridge (bridge B4) with the 23S rRNA of the 50S subunit in the ribosome. This is Small ribosomal subunit protein uS15 from Shewanella loihica (strain ATCC BAA-1088 / PV-4).